The sequence spans 698 residues: Polyribonucleotide nucleotidyltransferase (698 aa).

The Mg(2+) site is built by Asp487 and Asp493. The 60-residue stretch at 555–614 folds into the KH domain; that stretch reads PKIIQIQIDPQKIGDVVGQRGKTINAIIEQTGVKIDINDEGAVSVCGTDKDMMDKAINMI. The 69-residue stretch at 624–692 folds into the S1 motif domain; it reads GQVFEGKVIS…KMGRISFSIK (69 aa).

Belongs to the polyribonucleotide nucleotidyltransferase family. Mg(2+) serves as cofactor.

It localises to the cytoplasm. It carries out the reaction RNA(n+1) + phosphate = RNA(n) + a ribonucleoside 5'-diphosphate. In terms of biological role, involved in mRNA degradation. Catalyzes the phosphorolysis of single-stranded polyribonucleotides processively in the 3'- to 5'-direction. The polypeptide is Polyribonucleotide nucleotidyltransferase (Lachnoclostridium phytofermentans (strain ATCC 700394 / DSM 18823 / ISDg) (Clostridium phytofermentans)).